The following is a 127-amino-acid chain: Aspartate 1-decarboxylase (127 aa).

Catalysis depends on S25, which acts as the Schiff-base intermediate with substrate; via pyruvic acid. Position 25 is a pyruvic acid (Ser) (S25). T57 contributes to the substrate binding site. Residue Y58 is the Proton donor of the active site. Substrate is bound at residue 73-75 (GSA).

Belongs to the PanD family. As to quaternary structure, heterooctamer of four alpha and four beta subunits. Pyruvate serves as cofactor. Post-translationally, is synthesized initially as an inactive proenzyme, which is activated by self-cleavage at a specific serine bond to produce a beta-subunit with a hydroxyl group at its C-terminus and an alpha-subunit with a pyruvoyl group at its N-terminus.

The protein resides in the cytoplasm. The catalysed reaction is L-aspartate + H(+) = beta-alanine + CO2. The protein operates within cofactor biosynthesis; (R)-pantothenate biosynthesis; beta-alanine from L-aspartate: step 1/1. Functionally, catalyzes the pyruvoyl-dependent decarboxylation of aspartate to produce beta-alanine. In Laribacter hongkongensis (strain HLHK9), this protein is Aspartate 1-decarboxylase.